The chain runs to 61 residues: uncharacterized protein (61 aa).

Residues 39–61 (PRPFTPGLADPRRLGPRRVQAAQ) form a disordered region.

This is an uncharacterized protein from Pan troglodytes (Chimpanzee).